The primary structure comprises 960 residues: MSTSHHHHHPPYLITTLFFLFLNFSCLHANELELLLSFKSSIQDPLKHLSSWSYSSTNDVCLWSGVVCNNISRVVSLDLSGKNMSGQILTAATFRLPFLQTINLSNNNLSGPIPHDIFTTSSPSLRYLNLSNNNFSGSIPRGFLPNLYTLDLSNNMFTGEIYNDIGVFSNLRVLDLGGNVLTGHVPGYLGNLSRLEFLTLASNQLTGGVPVELGKMKNLKWIYLGYNNLSGEIPYQIGGLSSLNHLDLVYNNLSGPIPPSLGDLKKLEYMFLYQNKLSGQIPPSIFSLQNLISLDFSDNSLSGEIPELVAQMQSLEILHLFSNNLTGKIPEGVTSLPRLKVLQLWSNRFSGGIPANLGKHNNLTVLDLSTNNLTGKLPDTLCDSGHLTKLILFSNSLDSQIPPSLGMCQSLERVRLQNNGFSGKLPRGFTKLQLVNFLDLSNNNLQGNINTWDMPQLEMLDLSVNKFFGELPDFSRSKRLKKLDLSRNKISGVVPQGLMTFPEIMDLDLSENEITGVIPRELSSCKNLVNLDLSHNNFTGEIPSSFAEFQVLSDLDLSCNQLSGEIPKNLGNIESLVQVNISHNLLHGSLPFTGAFLAINATAVEGNIDLCSENSASGLRPCKVVRKRSTKSWWLIITSTFAAFLAVLVSGFFIVLVFQRTHNVLEVKKVEQEDGTKWETQFFDSKFMKSFTVNTILSSLKDQNVLVDKNGVHFVVKEVKKYDSLPEMISDMRKLSDHKNILKIVATCRSETVAYLIHEDVEGKRLSQVLSGLSWERRRKIMKGIVEALRFLHCRCSPAVVAGNLSPENIVIDVTDEPRLCLGLPGLLCMDAAYMAPETREHKEMTSKSDIYGFGILLLHLLTGKCSSSNEDIESGVNGSLVKWARYSYSNCHIDTWIDSSIDTSVHQREIVHVMNLALKCTAIDPQERPCTNNVLQALESTSSSSSSCTTYLSKILSLA.

The N-terminal stretch at 1–29 (MSTSHHHHHPPYLITTLFFLFLNFSCLHA) is a signal peptide. At 30 to 634 (NELELLLSFK…VRKRSTKSWW (605 aa)) the chain is on the extracellular side. A disulfide bridge links Cys61 with Cys68. N-linked (GlcNAc...) asparagine glycans are attached at residues Asn70, Asn83, Asn103, Asn108, Asn129, and Asn134. LRR repeat units follow at residues 71–96 (ISRVVSLDLSGKNMSGQILTAATFRL), 97–120 (PFLQTINLSNNNLSGPIPHDIFTT), 122–146 (SPSLRYLNLSNNNFSGSIPRGFLPN), 149–168 (TLDLSNNMFTGEIYNDIGVF), 169–194 (SNLRVLDLGGNVLTGHVPGYLGNLSR), 196–216 (EFLTLASNQLTGGVPVELGKM), 217–240 (KNLKWIYLGYNNLSGEIPYQIGGL), 241–264 (SSLNHLDLVYNNLSGPIPPSLGDL), 265–288 (KKLEYMFLYQNKLSGQIPPSIFSL), 290–312 (NLISLDFSDNSLSGEIPELVAQM), 313–336 (QSLEILHLFSNNLTGKIPEGVTSL), 338–360 (RLKVLQLWSNRFSGGIPANLGKH), 361–384 (NNLTVLDLSTNNLTGKLPDTLCDS), 386–408 (HLTKLILFSNSLDSQIPPSLGMC), 409–432 (QSLERVRLQNNGFSGKLPRGFTKL), 434–454 (LVNFLDLSNNNLQGNINTWDM), 455–477 (PQLEMLDLSVNKFFGELPDFSRS), 478–501 (KRLKKLDLSRNKISGVVPQGLMTF), 503–525 (EIMDLDLSENEITGVIPRELSSC), 526–549 (KNLVNLDLSHNNFTGEIPSSFAEF), 550–573 (QVLSDLDLSCNQLSGEIPKNLGNI), and 575–598 (SLVQVNISHNLLHGSLPFTGAFLA). Asn191 carries N-linked (GlcNAc...) asparagine glycosylation. The CLE45 peptide binding signature appears at 221 to 226 (WIYLGY). N-linked (GlcNAc...) asparagine glycans are attached at residues Asn228 and Asn252. A glycan (N-linked (GlcNAc...) asparagine) is linked at Asn324. N-linked (GlcNAc...) asparagine glycosylation is found at Asn362 and Asn372. N-linked (GlcNAc...) asparagine glycosylation occurs at Asn537. Asn580 and Asn600 each carry an N-linked (GlcNAc...) asparagine glycan. The helical transmembrane segment at 635–655 (LIITSTFAAFLAVLVSGFFIV) threads the bilayer. The Cytoplasmic portion of the chain corresponds to 656–960 (LVFQRTHNVL…TYLSKILSLA (305 aa)). Residues 691–953 (FTVNTILSSL…SSSSSCTTYL (263 aa)) enclose the Protein kinase domain. Thr692 is subject to Phosphothreonine. Residues 697 to 705 (LSSLKDQNV) and Lys717 each bind ATP. Tyr834 carries the phosphotyrosine modification.

Belongs to the protein kinase superfamily. Ser/Thr protein kinase family. In terms of assembly, self-interacts. Binds to CLE45 present in the pistil, particularly under relatively high temperature (at 30 degrees Celsius). As to expression, expressed in pollen grains and roots vascular tissues. Present in roots.

The protein localises to the cell membrane. The catalysed reaction is L-seryl-[protein] + ATP = O-phospho-L-seryl-[protein] + ADP + H(+). The enzyme catalyses L-threonyl-[protein] + ATP = O-phospho-L-threonyl-[protein] + ADP + H(+). Functionally, receptor with a serine/threonine-protein kinase activity. Together with SKM2, LRR-rich receptor-like kinase (LRR-RLK) required for male fertility by the perception of CLE43 and CLE45 peptides and the transduction of their promoting action in pollen tubes, especially under relatively high temperature (at 30 degrees Celsius), thus conferring tolerance against high temperature probably through the maintenance of mitochondrial activity. Seems to not be involved in the perception of CLE45 peptide in roots. In Arabidopsis thaliana (Mouse-ear cress), this protein is Leucine-rich repeat receptor-like serine/threonine-protein kinase SKM1.